The chain runs to 565 residues: Phosphatidylinositol 4-kinase gamma 4 (565 aa).

2 consecutive Ubiquitin-like domains span residues 32 to 104 and 109 to 187; these read IVIF…LVVR and RAIS…RPAK. The region spanning 257–542 is the PI3K/PI4K catalytic domain; sequence GYLPVMSTEG…AILPGTSEET (286 aa). The tract at residues 263 to 269 is G-loop; the sequence is STEGSGG. ATP contacts are provided by residues 264–270 and Lys286; that span reads TEGSGGV. The disordered stretch occupies residues 291 to 311; sequence EPMAKNNPRGLPLSTDGEGLK. 369–372 is a binding site for ATP; sequence QLFV. Positions 402–410 are catalytic loop; that stretch reads ANADRHAGN. The interval 425 to 451 is activation loop; it reads PIDHGYCLPEKFEDCTFEWLYWPQARE. Asp427 is a binding site for ATP.

This sequence belongs to the PI3/PI4-kinase family. Type II PI4K subfamily. Interacts with FTIP1 and RPN10. In terms of tissue distribution, specifically expressed in the phloem including companion cells.

It is found in the nucleus. The protein resides in the endoplasmic reticulum. It catalyses the reaction a 1,2-diacyl-sn-glycero-3-phospho-(1D-myo-inositol) + ATP = a 1,2-diacyl-sn-glycero-3-phospho-(1D-myo-inositol 4-phosphate) + ADP + H(+). Its function is as follows. The phosphorylation of phosphatidylinositol (PI) to PI4P is the first committed step in the generation of phosphatidylinositol 4,5-bisphosphate (PIP2), a precursor of the second messenger inositol 1,4,5-trisphosphate (InsP3). Involved in the control of flowering under long day conditions by promoting degradation of FTIP1. Recruits FTIP1 for degradation by the 26S proteasome in leaves, which affects RFT1 transport to the shoot apical meristem (SAM). The protein is Phosphatidylinositol 4-kinase gamma 4 of Oryza sativa subsp. japonica (Rice).